Here is a 623-residue protein sequence, read N- to C-terminus: Glutathione import ATP-binding protein GsiA (623 aa).

ABC transporter domains follow at residues 15–269 (VENL…RALL) and 314–564 (LRVR…RKLL). Residues 49–56 (GESGSGKS) and 357–364 (GESGSGKS) contribute to the ATP site.

Belongs to the ABC transporter superfamily. Glutathione importer (TC 3.A.1.5.11) family. As to quaternary structure, the complex is composed of two ATP-binding proteins (GsiA), two transmembrane proteins (GsiC and GsiD) and a solute-binding protein (GsiB).

It is found in the cell inner membrane. The enzyme catalyses glutathione(out) + ATP + H2O = glutathione(in) + ADP + phosphate + H(+). In terms of biological role, part of the ABC transporter complex GsiABCD involved in glutathione import. Responsible for energy coupling to the transport system. This Escherichia coli O6:H1 (strain CFT073 / ATCC 700928 / UPEC) protein is Glutathione import ATP-binding protein GsiA.